Here is a 202-residue protein sequence, read N- to C-terminus: Dephospho-CoA kinase (202 aa).

In terms of domain architecture, DPCK spans V4–N201. Residue A12–T17 participates in ATP binding.

The protein belongs to the CoaE family.

Its subcellular location is the cytoplasm. The catalysed reaction is 3'-dephospho-CoA + ATP = ADP + CoA + H(+). Its pathway is cofactor biosynthesis; coenzyme A biosynthesis; CoA from (R)-pantothenate: step 5/5. Functionally, catalyzes the phosphorylation of the 3'-hydroxyl group of dephosphocoenzyme A to form coenzyme A. The protein is Dephospho-CoA kinase of Vibrio vulnificus (strain YJ016).